Consider the following 93-residue polypeptide: Small ribosomal subunit protein uS19 (93 aa).

The protein belongs to the universal ribosomal protein uS19 family.

Protein S19 forms a complex with S13 that binds strongly to the 16S ribosomal RNA. The sequence is that of Small ribosomal subunit protein uS19 from Alkaliphilus metalliredigens (strain QYMF).